The chain runs to 268 residues: Glutamate racemase (268 aa).

Substrate-binding positions include 9–10 and 41–42; these read DS and YG. Residue Cys73 is the Proton donor/acceptor of the active site. A substrate-binding site is contributed by 74-75; it reads NS. The active-site Proton donor/acceptor is the Cys183. Residue 184 to 185 participates in substrate binding; that stretch reads TH.

This sequence belongs to the aspartate/glutamate racemases family.

The catalysed reaction is L-glutamate = D-glutamate. It functions in the pathway cell wall biogenesis; peptidoglycan biosynthesis. Provides the (R)-glutamate required for cell wall biosynthesis. This is Glutamate racemase from Shewanella pealeana (strain ATCC 700345 / ANG-SQ1).